The chain runs to 198 residues: Nucleoside triphosphate pyrophosphatase (198 aa).

Asp74 serves as the catalytic Proton acceptor.

It belongs to the Maf family. Requires a divalent metal cation as cofactor.

Its subcellular location is the cytoplasm. It catalyses the reaction a ribonucleoside 5'-triphosphate + H2O = a ribonucleoside 5'-phosphate + diphosphate + H(+). The enzyme catalyses a 2'-deoxyribonucleoside 5'-triphosphate + H2O = a 2'-deoxyribonucleoside 5'-phosphate + diphosphate + H(+). Its function is as follows. Nucleoside triphosphate pyrophosphatase. May have a dual role in cell division arrest and in preventing the incorporation of modified nucleotides into cellular nucleic acids. The sequence is that of Nucleoside triphosphate pyrophosphatase from Sphingopyxis alaskensis (strain DSM 13593 / LMG 18877 / RB2256) (Sphingomonas alaskensis).